Here is a 1150-residue protein sequence, read N- to C-terminus: Rho-type GTPase-activating protein 1 (1150 aa).

Over residues 1–10 (MSQRDAKKDG) the composition is skewed to basic and acidic residues. Positions 1 to 78 (MSQRDAKKDG…AESRKALPNQ (78 aa)) are disordered. The segment covering 40 to 62 (TTKNFPHSRHTSTVAGTEGGSSL) has biased composition (polar residues). LIM zinc-binding domains are found at residues 114-177 (KICA…RRLD), 178-238 (LLCA…LFAA), and 483-546 (DLCY…SSNV). A disordered region spans residues 586–683 (SQRKPLSVDP…SHGGSITGKS (98 aa)). The span at 598–617 (ENVSSTVETAKQAETTASSD) shows a compositional bias: polar residues. Residues 642 to 655 (SNETQSSSNSTETS) show a composition bias toward low complexity. Residue Ser-690 is modified to Phosphoserine. The interval 726-759 (AFRHMPSYTDPSYRKNSGAIYDKNDGTQKGLTPK) is disordered. A Rho-GAP domain is found at 837–1038 (VPLEILVERN…LLIENFEKFC (202 aa)). Disordered stretches follow at residues 1078 to 1097 (LDER…RQPI) and 1104 to 1150 (LTSD…IRDS). Residues 1088-1097 (ASTKRKRQPI) show a composition bias toward basic residues. Residues 1104–1134 (LTSDVPSGSEVADTNSLSSTTKDEASPNSDA) are compositionally biased toward polar residues.

The protein localises to the cell tip. It is found in the nucleus. Its function is as follows. GTPase-activating protein for Rho1. Involved in the F-actin patch localization, cell morphogenesis, regulation of septation, and cell wall synthesis. This chain is Rho-type GTPase-activating protein 1 (rga1), found in Schizosaccharomyces pombe (strain 972 / ATCC 24843) (Fission yeast).